We begin with the raw amino-acid sequence, 226 residues long: Imidazole glycerol phosphate synthase subunit HisH (226 aa).

Residues 6–214 (NIALVDYGVG…VERAASRSAA (209 aa)) form the Glutamine amidotransferase type-1 domain. Catalysis depends on cysteine 84, which acts as the Nucleophile. Active-site residues include histidine 189 and glutamate 191.

In terms of assembly, heterodimer of HisH and HisF.

The protein resides in the cytoplasm. It catalyses the reaction 5-[(5-phospho-1-deoxy-D-ribulos-1-ylimino)methylamino]-1-(5-phospho-beta-D-ribosyl)imidazole-4-carboxamide + L-glutamine = D-erythro-1-(imidazol-4-yl)glycerol 3-phosphate + 5-amino-1-(5-phospho-beta-D-ribosyl)imidazole-4-carboxamide + L-glutamate + H(+). It carries out the reaction L-glutamine + H2O = L-glutamate + NH4(+). Its pathway is amino-acid biosynthesis; L-histidine biosynthesis; L-histidine from 5-phospho-alpha-D-ribose 1-diphosphate: step 5/9. Functionally, IGPS catalyzes the conversion of PRFAR and glutamine to IGP, AICAR and glutamate. The HisH subunit catalyzes the hydrolysis of glutamine to glutamate and ammonia as part of the synthesis of IGP and AICAR. The resulting ammonia molecule is channeled to the active site of HisF. The protein is Imidazole glycerol phosphate synthase subunit HisH of Gloeobacter violaceus (strain ATCC 29082 / PCC 7421).